The following is a 505-amino-acid chain: Trans-cinnamate 4-monooxygenase (505 aa).

A helical transmembrane segment spans residues 3–23 (LLLIEKTLVALFAAIIGAILI). (E)-cinnamate-binding positions include 213-218 (RSRLAQ) and alanine 306. A heme-binding site is contributed by cysteine 447.

It belongs to the cytochrome P450 family. Requires heme as cofactor.

The protein localises to the membrane. It carries out the reaction (E)-cinnamate + reduced [NADPH--hemoprotein reductase] + O2 = (E)-4-coumarate + oxidized [NADPH--hemoprotein reductase] + H2O + H(+). Its pathway is phenylpropanoid metabolism; trans-4-coumarate biosynthesis; trans-4-coumarate from trans-cinnamate: step 1/1. With respect to regulation, inactivated by piperonylic acid. Its function is as follows. Catalyzes the first oxidative step of the phenylpropanoid pathway in higher plants by transforming trans-cinnamate into p-coumarate. The compounds formed by this pathway are essential components for lignification, pollination, and defense against ultraviolet light, predators and pathogens. Can also use 2-naphthoic acid as substrate. The chain is Trans-cinnamate 4-monooxygenase from Helianthus tuberosus (Jerusalem artichoke).